The sequence spans 750 residues: MGRSESQMDITDINAPKPKKKQRWTPLEISLSVLVLLLTIIAVTMIALYATYDDGICKSSDCIKSAARLIQNMDASVEPCTDFFKYACGGWLKRNVIPETSSRYSNFDILRDELEVILKDVLQEPKTEDIVAVQKAKTLYRSCINESAIDSRGGQPLLKLLPDIYGWPVASDNWDQTYGTSWTAEKSIAQLNSKYGKKVLINFFVGTDDKNSTQHIIHFDQPRLGLPSRDYYECTGIYKEACTAYVDFMISVARLIRQEQSLPIDENQLSLEMNKVMELEKEIANATTKPEDRNDPMLLYNKMTLAKLQNNFSLEVNGKSFSWSNFTNEIMSTVNINIQNEEEVVVYAPEYLTKLKPILTKYSPRDLQNLMSWRFIMDLVSSLSRNYKESRNAFRKALYGTTSETATWRRCANYVNGNMENAVGRLYVEAAFAGESKHVVEDLIAQIREVFIQTLDDLTWMDAETKKKAEEKALAIKERIGYPDDIISNENKLNNEYLELNYREDEYFENIIQNLKFSQSKQLKKLREKVDKDEWISGAAVVNAFYSSGRNQIVFPAGILQPPFFSAQQSNSLNYGGIGMVIGHEITHGFDDNGRNFNKDGDLVDWWTQQSANNFKDQSQCMVYQYGNFSWDLAGGQHLNGINTLGENIADNGGIGQAYRAYQNYVKKNGEEKLLPGLDLNHKQLFFLNFAQVWCGTYRPEYAVNSIKTDVHSPGNFRIIGTLQNSAEFADAFHCRKNSYMNPERKCRVW.

A lipid anchor (N-myristoyl glycine) is attached at G2. Over 2–28 the chain is Cytoplasmic; sequence GRSESQMDITDINAPKPKKKQRWTPLE. Phosphoserine is present on residues S4 and S6. A Stop-transfer sequence motif is present at residues 16–23; it reads PKPKKKQR. Residues 29–51 form a helical; Signal-anchor for type II membrane protein membrane-spanning segment; it reads ISLSVLVLLLTIIAVTMIALYAT. The Extracellular segment spans residues 52-750; that stretch reads YDDGICKSSD…MNPERKCRVW (699 aa). Residues 56–750 enclose the Peptidase M13 domain; sequence ICKSSDCIKS…MNPERKCRVW (695 aa). Intrachain disulfides connect C57/C62, C80/C735, C88/C695, C143/C411, C234/C242, and C621/C747. Residue R103 participates in a peptide binding. Residues N145 and N211 are each glycosylated (N-linked (GlcNAc...) asparagine). N285, N311, and N325 each carry an N-linked (GlcNAc...) asparagine glycan. H584 serves as a coordination point for Zn(2+). The active site involves E585. H588 contributes to the Zn(2+) binding site. An N-linked (GlcNAc...) asparagine glycan is attached at N628. E647 serves as a coordination point for Zn(2+). D651 (proton donor) is an active-site residue.

The protein belongs to the peptidase M13 family. The cofactor is Zn(2+). Myristoylation is a determinant of membrane targeting. Post-translationally, glycosylation at Asn-628 is necessary both for surface expression and neutral endopeptidase activity.

It localises to the cell membrane. The enzyme catalyses Preferential cleavage of polypeptides between hydrophobic residues, particularly with Phe or Tyr at P1'.. The catalysed reaction is substance P + H2O = substance P(1-9) + L-Leu-L-Met-NH2. It carries out the reaction substance P + H2O = substance P(1-7) + L-Phe-Gly-L-Leu-L-Met-NH2. It catalyses the reaction neurotensin + H2O = neurotensin(1-11) + L-isoleucyl-L-leucine. The enzyme catalyses neurotensin + H2O = neurotensin(1-10) + L-tyrosyl-L-isoleucyl-L-leucine. Thermolysin-like specificity, but is almost confined on acting on polypeptides of up to 30 amino acids. Biologically important in the destruction of opioid peptides such as Met- and Leu-enkephalins by cleavage of a Gly-Phe bond. Catalyzes cleavage of bradykinin, substance P and neurotensin peptides. Able to cleave angiotensin-1, angiotensin-2 and angiotensin 1-9. Involved in the degradation of the atrial natriuretic factor (ANF). Displays UV-inducible elastase activity toward skin preelastic and elastic fibers. This is Neprilysin from Mus musculus (Mouse).